The following is a 390-amino-acid chain: Phosphopentomutase (390 aa).

Mn(2+) contacts are provided by Asp9, Asp283, His288, Asp324, His325, and His336.

It belongs to the phosphopentomutase family. Mn(2+) serves as cofactor.

It localises to the cytoplasm. The enzyme catalyses 2-deoxy-alpha-D-ribose 1-phosphate = 2-deoxy-D-ribose 5-phosphate. It catalyses the reaction alpha-D-ribose 1-phosphate = D-ribose 5-phosphate. It functions in the pathway carbohydrate degradation; 2-deoxy-D-ribose 1-phosphate degradation; D-glyceraldehyde 3-phosphate and acetaldehyde from 2-deoxy-alpha-D-ribose 1-phosphate: step 1/2. Its function is as follows. Isomerase that catalyzes the conversion of deoxy-ribose 1-phosphate (dRib-1-P) and ribose 1-phosphate (Rib-1-P) to deoxy-ribose 5-phosphate (dRib-5-P) and ribose 5-phosphate (Rib-5-P), respectively. The chain is Phosphopentomutase from Thermotoga maritima (strain ATCC 43589 / DSM 3109 / JCM 10099 / NBRC 100826 / MSB8).